We begin with the raw amino-acid sequence, 101 residues long: Small ribosomal subunit protein uS14A (101 aa).

This sequence belongs to the universal ribosomal protein uS14 family. As to quaternary structure, part of the 30S ribosomal subunit. Contacts proteins S3 and S10.

Functionally, binds 16S rRNA, required for the assembly of 30S particles and may also be responsible for determining the conformation of the 16S rRNA at the A site. The sequence is that of Small ribosomal subunit protein uS14A from Salinispora arenicola (strain CNS-205).